Here is a 166-residue protein sequence, read N- to C-terminus: Large ribosomal subunit protein mL41 (166 aa).

Residues 1 to 26 (MNNCIKVVPIALRCQQRTISTSSVLE) constitute a mitochondrion transit peptide. The disordered stretch occupies residues 136-166 (KDGSAKEPSVNEQLTPEEALQRARKTGSDIF).

The protein belongs to the mitochondrion-specific ribosomal protein mL41 family. Component of the mitochondrial ribosome large subunit (39S) which comprises a 16S rRNA and about 50 distinct proteins.

It localises to the mitochondrion. This Drosophila melanogaster (Fruit fly) protein is Large ribosomal subunit protein mL41 (mRpL41).